Consider the following 740-residue polypeptide: Ribosomal protein S6 kinase alpha-3 (740 aa).

The segment at 1-38 (MPLAQLADPWQKMAVESPSDSAENGQQIMDEPMGEEEI) is disordered. The span at 18–27 (PSDSAENGQQ) shows a compositional bias: polar residues. Residues 68–327 (FELLKVLGQG…VEEIKRHSFF (260 aa)) form the Protein kinase 1 domain. ATP contacts are provided by residues 74–82 (LGQGSFGKV) and Lys-100. Catalysis depends on Asp-193, which acts as the Proton acceptor. Phosphoserine; by PDPK1 is present on Ser-227. One can recognise an AGC-kinase C-terminal domain in the interval 328-397 (STIDWNKLYR…VAITSDDESQ (70 aa)). Thr-365 is modified (phosphothreonine). A phosphoserine mark is found at Ser-369 and Ser-375. A Phosphoserine; by autocatalysis and MAPKAPK2 modification is found at Ser-386. Ser-415 carries the post-translational modification Phosphoserine. Residues 422-679 (YEVKEDIGVG…AALVLRHPWI (258 aa)) form the Protein kinase 2 domain. Residues 428 to 436 (IGVGSYSVC) and Lys-451 each bind ATP. Tyr-529 carries the post-translational modification Phosphotyrosine; by FGFR3. The Proton acceptor role is filled by Asp-539. Residues Ser-556 and Ser-715 each carry the phosphoserine modification.

It belongs to the protein kinase superfamily. AGC Ser/Thr protein kinase family. S6 kinase subfamily. As to quaternary structure, forms a complex with either MAPK1/ERK2 or MAPK3/ERK1 in quiescent cells. Transiently dissociates following mitogenic stimulation. Interacts with NFATC4, ETV1/ER81 and FGFR1. Mg(2+) serves as cofactor. Activated by phosphorylation at Ser-227 by PDPK1. Autophosphorylated on Ser-386, as part of the activation process. May be phosphorylated at Thr-365 and Ser-369 by MAPK1/ERK2 and MAPK3/ERK1. Can also be activated via phosphorylation at Ser-386 by MAPKAPK2. In terms of processing, N-terminal myristoylation results in an activated kinase in the absence of added growth factors. Expressed in many tissues, highest levels in skeletal muscle.

It localises to the nucleus. The protein resides in the cytoplasm. It catalyses the reaction L-seryl-[protein] + ATP = O-phospho-L-seryl-[protein] + ADP + H(+). The catalysed reaction is L-threonyl-[protein] + ATP = O-phospho-L-threonyl-[protein] + ADP + H(+). Upon extracellular signal or mitogen stimulation, phosphorylated at Thr-577 in the C-terminal kinase domain (CTKD) by MAPK1/ERK2 and MAPK3/ERK1. The activated CTKD then autophosphorylates Ser-386, allowing binding of PDPK1, which in turn phosphorylates Ser-227 in the N-terminal kinase domain (NTDK) leading to the full activation of the protein and subsequent phosphorylation of the substrates by the NTKD. Serine/threonine-protein kinase that acts downstream of ERK (MAPK1/ERK2 and MAPK3/ERK1) signaling and mediates mitogenic and stress-induced activation of the transcription factors CREB1, ETV1/ER81 and NR4A1/NUR77, regulates translation through RPS6 and EIF4B phosphorylation, and mediates cellular proliferation, survival, and differentiation by modulating mTOR signaling and repressing pro-apoptotic function of BAD and DAPK1. In fibroblast, is required for EGF-stimulated phosphorylation of CREB1 and histone H3 at 'Ser-10', which results in the subsequent transcriptional activation of several immediate-early genes. In response to mitogenic stimulation (EGF and PMA), phosphorylates and activates NR4A1/NUR77 and ETV1/ER81 transcription factors and the cofactor CREBBP. Upon insulin-derived signal, acts indirectly on the transcription regulation of several genes by phosphorylating GSK3B at 'Ser-9' and inhibiting its activity. Phosphorylates RPS6 in response to serum or EGF via an mTOR-independent mechanism and promotes translation initiation by facilitating assembly of the preinitiation complex. In response to insulin, phosphorylates EIF4B, enhancing EIF4B affinity for the EIF3 complex and stimulating cap-dependent translation. Is involved in the mTOR nutrient-sensing pathway by directly phosphorylating TSC2 at 'Ser-1798', which potently inhibits TSC2 ability to suppress mTOR signaling, and mediates phosphorylation of RPTOR, which regulates mTORC1 activity and may promote rapamycin-sensitive signaling independently of the PI3K/AKT pathway. Mediates cell survival by phosphorylating the pro-apoptotic proteins BAD and DAPK1 and suppressing their pro-apoptotic function. Promotes the survival of hepatic stellate cells by phosphorylating CEBPB in response to the hepatotoxin carbon tetrachloride (CCl4). Is involved in cell cycle regulation by phosphorylating the CDK inhibitor CDKN1B, which promotes CDKN1B association with 14-3-3 proteins and prevents its translocation to the nucleus and inhibition of G1 progression. In LPS-stimulated dendritic cells, is involved in TLR4-induced macropinocytosis, and in myeloma cells, acts as effector of FGFR3-mediated transformation signaling, after direct phosphorylation at Tyr-529 by FGFR3. Negatively regulates EGF-induced MAPK1/3 phosphorylation via phosphorylation of SOS1. Phosphorylates SOS1 at 'Ser-1134' and 'Ser-1161' that create YWHAB and YWHAE binding sites and which contribute to the negative regulation of MAPK1/3 phosphorylation. Phosphorylates EPHA2 at 'Ser-897', the RPS6KA-EPHA2 signaling pathway controls cell migration. Acts as a regulator of osteoblast differentiation by mediating phosphorylation of ATF4, thereby promoting ATF4 transactivation activity. This chain is Ribosomal protein S6 kinase alpha-3 (RPS6KA3), found in Homo sapiens (Human).